Here is a 148-residue protein sequence, read N- to C-terminus: Large ribosomal subunit protein bL9 (148 aa).

The protein belongs to the bacterial ribosomal protein bL9 family.

Functionally, binds to the 23S rRNA. The chain is Large ribosomal subunit protein bL9 from Clostridium beijerinckii (strain ATCC 51743 / NCIMB 8052) (Clostridium acetobutylicum).